The chain runs to 351 residues: Homoserine O-acetyltransferase (351 aa).

The 284-residue stretch at 51-334 (VIWVLHALTG…IYGHDAFLIE (284 aa)) folds into the AB hydrolase-1 domain. Serine 146 functions as the Nucleophile in the catalytic mechanism. A substrate-binding site is contributed by arginine 212. Catalysis depends on residues aspartate 299 and histidine 328. Aspartate 329 lines the substrate pocket.

The protein belongs to the AB hydrolase superfamily. MetX family. In terms of assembly, homodimer.

The protein resides in the cytoplasm. It carries out the reaction L-homoserine + acetyl-CoA = O-acetyl-L-homoserine + CoA. It participates in amino-acid biosynthesis; L-methionine biosynthesis via de novo pathway; O-acetyl-L-homoserine from L-homoserine: step 1/1. Its function is as follows. Transfers an acetyl group from acetyl-CoA to L-homoserine, forming acetyl-L-homoserine. This Cyclobacterium marinum (strain ATCC 25205 / DSM 745 / LMG 13164 / NCIMB 1802) (Flectobacillus marinus) protein is Homoserine O-acetyltransferase.